Here is a 226-residue protein sequence, read N- to C-terminus: Ribonuclease HII (226 aa).

One can recognise an RNase H type-2 domain in the interval 29–220 (GPVAGVDEAG…VAALLHRVDN (192 aa)). 3 residues coordinate a divalent metal cation: aspartate 35, glutamate 36, and aspartate 129.

This sequence belongs to the RNase HII family. Requires Mn(2+) as cofactor. Mg(2+) serves as cofactor.

It is found in the cytoplasm. The enzyme catalyses Endonucleolytic cleavage to 5'-phosphomonoester.. Its function is as follows. Endonuclease that specifically degrades the RNA of RNA-DNA hybrids. The polypeptide is Ribonuclease HII (Rhodococcus opacus (strain B4)).